The chain runs to 301 residues: Protein phosphatase 1 regulatory subunit 3B (301 aa).

The PP1-binding motif motif lies at 79–82 (RVSF). A CBM21 domain is found at 142 to 250 (RNRLQAESVC…SNKGLNYRIV (109 aa)).

Interacts with glycogen, PPP1CC catalytic subunit of PP1 and PYGL. Associates with glycogen particles. Forms complexes with debranching enzyme, glycogen phosphorylase, glycogen synthase and phosphorylase kinase which is necessary for its regulation of PP1 activity.

Functionally, acts as a glycogen-targeting subunit for phosphatase PP1. Facilitates interaction of the PP1 with enzymes of the glycogen metabolism and regulates its activity. Suppresses the rate at which PP1 dephosphorylates (inactivates) glycogen phosphorylase and enhances the rate at which it activates glycogen synthase and therefore limits glycogen breakdown. The protein is Protein phosphatase 1 regulatory subunit 3B (ppp1r3b) of Xenopus tropicalis (Western clawed frog).